The chain runs to 410 residues: CRAL-TRIO domain-containing protein F28H7.8 (410 aa).

Residues 81 to 257 (FSDARRKHAP…RYGGMIPDIQ (177 aa)) enclose the CRAL-TRIO domain.

In Caenorhabditis elegans, this protein is CRAL-TRIO domain-containing protein F28H7.8.